A 562-amino-acid polypeptide reads, in one-letter code: NAD-dependent malic enzyme (562 aa).

Y101 (proton donor) is an active-site residue. R154 contributes to the NAD(+) binding site. K172 serves as the catalytic Proton acceptor. A divalent metal cation-binding residues include E243, D244, and D267. Residues D267 and N415 each contribute to the NAD(+) site.

This sequence belongs to the malic enzymes family. Homotetramer. It depends on Mg(2+) as a cofactor. The cofactor is Mn(2+).

The catalysed reaction is (S)-malate + NAD(+) = pyruvate + CO2 + NADH. It catalyses the reaction oxaloacetate + H(+) = pyruvate + CO2. In Shewanella sp. (strain ANA-3), this protein is NAD-dependent malic enzyme.